The primary structure comprises 284 residues: L-ribulose-5-phosphate 3-epimerase UlaE (284 aa).

This sequence belongs to the L-ribulose-5-phosphate 3-epimerase family.

It catalyses the reaction L-ribulose 5-phosphate = L-xylulose 5-phosphate. It participates in cofactor degradation; L-ascorbate degradation; D-xylulose 5-phosphate from L-ascorbate: step 3/4. Catalyzes the isomerization of L-xylulose-5-phosphate to L-ribulose-5-phosphate. Is involved in the anaerobic L-ascorbate utilization. The sequence is that of L-ribulose-5-phosphate 3-epimerase UlaE from Escherichia coli O139:H28 (strain E24377A / ETEC).